Consider the following 136-residue polypeptide: uncharacterized protein (136 aa).

This is an uncharacterized protein from Gallus gallus (Chicken).